A 258-amino-acid chain; its full sequence is MLDSVASTLQLSELLSLTKAEQSIRLAEINVELEMLSAQERVAWALQNLEGAHAVSSSFGIQAAVMLHLVSKQQADIPVILTDTGYLFPETYQFIDELTKSLNLNLKVYRANESANWQEARYGKLWEQGIEGIEKYNKLNKVEPMRRALNELNVKTWFSGLRREQSQSRAGLPILSIQNGVFKFLPVVDWSNKDVHYYLKEHGLSYHPLWEQGYLSVGDTHTTQKWEPGMSEEETRFFGLKRECGLHEEDNEQDGSGI.

The active-site Nucleophile; cysteine thiosulfonate intermediate is cysteine 244.

The protein belongs to the PAPS reductase family. CysH subfamily.

The protein resides in the cytoplasm. It carries out the reaction [thioredoxin]-disulfide + sulfite + adenosine 3',5'-bisphosphate + 2 H(+) = [thioredoxin]-dithiol + 3'-phosphoadenylyl sulfate. It participates in sulfur metabolism; hydrogen sulfide biosynthesis; sulfite from sulfate: step 3/3. In terms of biological role, catalyzes the formation of sulfite from phosphoadenosine 5'-phosphosulfate (PAPS) using thioredoxin as an electron donor. This is Phosphoadenosine 5'-phosphosulfate reductase from Vibrio vulnificus (strain CMCP6).